The primary structure comprises 1260 residues: Methionine synthase (1260 aa).

The Hcy-binding domain maps to 13-333; it reads FGIIRKILSE…DHIRAFCNAI (321 aa). Zn(2+) is bound by residues cysteine 255, cysteine 318, and cysteine 319. Residues 364 to 625 enclose the Pterin-binding domain; sequence FVNVGERCNV…IPKDLLKLVE (262 aa). In terms of domain architecture, B12-binding N-terminal spans 655–749; the sequence is EVEEWRNKPV…FMEEEKRLKR (95 aa). Methylcob(III)alamin-binding positions include glutamate 699, 775-779, histidine 778, serine 823, threonine 827, and alanine 879; that span reads GDVHD. One can recognise a B12-binding domain in the interval 766–883; the sequence is GVVVLATVKG…VHVLDASRSV (118 aa). Residues 916–1256 enclose the AdoMet activation domain; it reads SLKDRKYTSL…LSSILSYDRL (341 aa). S-adenosyl-L-methionine-binding positions include aspartate 966, arginine 1163, and 1218-1219; that span reads YF.

This sequence belongs to the vitamin-B12 dependent methionine synthase family. Requires methylcob(III)alamin as cofactor. It depends on Zn(2+) as a cofactor.

The enzyme catalyses (6S)-5-methyl-5,6,7,8-tetrahydrofolate + L-homocysteine = (6S)-5,6,7,8-tetrahydrofolate + L-methionine. It functions in the pathway amino-acid biosynthesis; L-methionine biosynthesis via de novo pathway; L-methionine from L-homocysteine (MetH route): step 1/1. In terms of biological role, catalyzes the transfer of a methyl group from methyl-cobalamin to homocysteine, yielding enzyme-bound cob(I)alamin and methionine. Subsequently, remethylates the cofactor using methyltetrahydrofolate. The chain is Methionine synthase (mtr) from Dictyostelium discoideum (Social amoeba).